The primary structure comprises 316 residues: Pentatricopeptide repeat-containing protein At1g19525 (316 aa).

6 PPR repeats span residues 9 to 43 (DILT…GLRP), 44 to 78 (DEKI…ELKA), 79 to 113 (SEEV…SDGP), 115 to 149 (SFEA…GHKP), 150 to 184 (DDKC…GIEI), and 185 to 219 (GVIT…GEAP).

This sequence belongs to the PPR family. P subfamily.

The protein is Pentatricopeptide repeat-containing protein At1g19525 of Arabidopsis thaliana (Mouse-ear cress).